The following is a 694-amino-acid chain: Phosphatase and actin regulator 4-A (694 aa).

Composition is skewed to basic and acidic residues over residues 1–13 (MEDR…DHSE) and 46–72 (SSDS…ELIK). Disordered stretches follow at residues 1–29 (MEDR…KSKF), 42–169 (RKRK…QPLP), 192–403 (VNEV…HIRI), 426–445 (LFMQ…RSLP), and 450–572 (LLKV…QIRQ). One copy of the RPEL 1 repeat lies at 55–80 (EVLERKISTRKPREELIKRGLLVEVP). The segment covering 240–267 (SISTSVTQESAVAGQKSDSSNRLQSSAP) has biased composition (polar residues). Residues 300–317 (AELSLALAGSPLSPAGSR) show a composition bias toward low complexity. Composition is skewed to pro residues over residues 318–327 (PSPPLPPKRA) and 372–381 (SNPPVPPLTL). Acidic residues-rich tracts occupy residues 455–467 (DDED…DESL), 499–511 (QEEE…DTDS), and 519–529 (DDEEEEEEEET). RPEL repeat units follow at residues 576–601 (TQLN…QKNE) and 613–638 (RRLT…RFNE).

The protein belongs to the phosphatase and actin regulator family. Binds ppp1ca and actin.

The protein localises to the cytoplasm. The protein resides in the cell projection. Its subcellular location is the lamellipodium. In terms of biological role, regulator of protein phosphatase 1 (PP1) required for neural tube and optic fissure closure, and enteric neural crest cell (ENCCs) migration during development. Acts as an activator of PP1. During neural tube closure, localizes to the ventral neural tube and activates PP1, leading to down-regulate cell proliferation within cranial neural tissue and the neural retina. Also acts as a regulator of migration of enteric neural crest cells (ENCCs) by activating PP1, leading to repression of the integrin signaling through the rho/rock pathway. The chain is Phosphatase and actin regulator 4-A (phactr4-a) from Xenopus laevis (African clawed frog).